A 196-amino-acid chain; its full sequence is Nodulation protein A (196 aa).

This sequence belongs to the NodA family.

It is found in the cytoplasm. Functionally, N-acyltransferase required for nodulation. Acts in the production of a small, heat-stable compound (Nod) that stimulates mitosis in various plant protoplasts. The chain is Nodulation protein A from Mesorhizobium plurifarium.